The chain runs to 265 residues: Putative 2-aminoethylphosphonate transport system permease protein PhnV (265 aa).

Helical transmembrane passes span 13–33 (GVVA…VILM), 69–89 (LTIG…AALA), 104–124 (VFYL…LVAF), 131–151 (MNGT…AFTF), 185–205 (LPLL…LSMG), and 233–253 (NIAD…LLMM). One can recognise an ABC transmembrane type-1 domain in the interval 65-253 (LLASLTIGFC…LVAITLLLMM (189 aa)).

It belongs to the binding-protein-dependent transport system permease family.

The protein localises to the cell inner membrane. Functionally, probably part of the PhnSTUV complex (TC 3.A.1.11.5) involved in 2-aminoethylphosphonate import. Probably responsible for the translocation of the substrate across the membrane. The chain is Putative 2-aminoethylphosphonate transport system permease protein PhnV (phnV) from Salmonella paratyphi A (strain ATCC 9150 / SARB42).